The sequence spans 139 residues: D-ribose pyranase (139 aa).

Catalysis depends on His-20, which acts as the Proton donor. Residues Asp-28, His-106, and 128-130 (YAN) contribute to the substrate site.

Belongs to the RbsD / FucU family. RbsD subfamily. As to quaternary structure, homodecamer.

The protein localises to the cytoplasm. It catalyses the reaction beta-D-ribopyranose = beta-D-ribofuranose. Its pathway is carbohydrate metabolism; D-ribose degradation; D-ribose 5-phosphate from beta-D-ribopyranose: step 1/2. Its function is as follows. Catalyzes the interconversion of beta-pyran and beta-furan forms of D-ribose. This chain is D-ribose pyranase, found in Escherichia coli O139:H28 (strain E24377A / ETEC).